Here is a 354-residue protein sequence, read N- to C-terminus: MRVDLFDFELPETSIALRPAEPRDAGRMLVVRPGAPLVDRTVRDLPDALRAGDALVFNDTRVIPARLNGVRTRPGAPGQRTEVMLHLREAPDRWRAFARPAKRLTAGDALRFGDLTATVLEKAEAGEIVLAFDRAGPELDAAIAAEGALPLPPYIAGKRATDARDATDYQTVYARNPGAVAAPTAGLHFSDALLADLDAAGLQRHHVTLHVGAGTFLPVKAEDTDGHRMHAEIGILDAATADALNAARAAGGRIVAVGTTALRLLESAARPDGTLAPFSGPTEIFITPGYRFRAVDALVTNFHLPRSTLFMLVSAFSGLETMRAAYAHAIGAGYRFYSYGDASLLFPGPRADTP.

Belongs to the QueA family. In terms of assembly, monomer.

The protein localises to the cytoplasm. The catalysed reaction is 7-aminomethyl-7-carbaguanosine(34) in tRNA + S-adenosyl-L-methionine = epoxyqueuosine(34) in tRNA + adenine + L-methionine + 2 H(+). The protein operates within tRNA modification; tRNA-queuosine biosynthesis. Transfers and isomerizes the ribose moiety from AdoMet to the 7-aminomethyl group of 7-deazaguanine (preQ1-tRNA) to give epoxyqueuosine (oQ-tRNA). This Methylobacterium radiotolerans (strain ATCC 27329 / DSM 1819 / JCM 2831 / NBRC 15690 / NCIMB 10815 / 0-1) protein is S-adenosylmethionine:tRNA ribosyltransferase-isomerase.